The chain runs to 489 residues: UDP-N-acetylmuramoyl-L-alanyl-D-glutamate--2,6-diaminopimelate ligase (489 aa).

A UDP-N-acetyl-alpha-D-muramoyl-L-alanyl-D-glutamate-binding site is contributed by Ser30. 108–114 is an ATP binding site; it reads GTNGKTT. UDP-N-acetyl-alpha-D-muramoyl-L-alanyl-D-glutamate is bound by residues Asn149, 150–151, Ser177, Gln183, and Arg185; that span reads TT. Lys217 bears the N6-carboxylysine mark. Meso-2,6-diaminopimelate-binding positions include Arg383, 407–410, Gly459, and Glu463; that span reads DNPR. Residues 407-410 carry the Meso-diaminopimelate recognition motif motif; that stretch reads DNPR.

The protein belongs to the MurCDEF family. MurE subfamily. Requires Mg(2+) as cofactor. In terms of processing, carboxylation is probably crucial for Mg(2+) binding and, consequently, for the gamma-phosphate positioning of ATP.

It localises to the cytoplasm. It catalyses the reaction UDP-N-acetyl-alpha-D-muramoyl-L-alanyl-D-glutamate + meso-2,6-diaminopimelate + ATP = UDP-N-acetyl-alpha-D-muramoyl-L-alanyl-gamma-D-glutamyl-meso-2,6-diaminopimelate + ADP + phosphate + H(+). The protein operates within cell wall biogenesis; peptidoglycan biosynthesis. Its function is as follows. Catalyzes the addition of meso-diaminopimelic acid to the nucleotide precursor UDP-N-acetylmuramoyl-L-alanyl-D-glutamate (UMAG) in the biosynthesis of bacterial cell-wall peptidoglycan. The sequence is that of UDP-N-acetylmuramoyl-L-alanyl-D-glutamate--2,6-diaminopimelate ligase from Geobacillus thermodenitrificans (strain NG80-2).